The chain runs to 321 residues: Aspartate carbamoyltransferase catalytic subunit (321 aa).

The carbamoyl phosphate site is built by R70 and T71. K98 contributes to the L-aspartate binding site. Carbamoyl phosphate is bound by residues R120, H148, and Q151. R181 and R235 together coordinate L-aspartate. Positions 276 and 277 each coordinate carbamoyl phosphate.

Belongs to the aspartate/ornithine carbamoyltransferase superfamily. ATCase family. As to quaternary structure, heterododecamer (2C3:3R2) of six catalytic PyrB chains organized as two trimers (C3), and six regulatory PyrI chains organized as three dimers (R2).

The enzyme catalyses carbamoyl phosphate + L-aspartate = N-carbamoyl-L-aspartate + phosphate + H(+). It functions in the pathway pyrimidine metabolism; UMP biosynthesis via de novo pathway; (S)-dihydroorotate from bicarbonate: step 2/3. In terms of biological role, catalyzes the condensation of carbamoyl phosphate and aspartate to form carbamoyl aspartate and inorganic phosphate, the committed step in the de novo pyrimidine nucleotide biosynthesis pathway. This is Aspartate carbamoyltransferase catalytic subunit from Gluconacetobacter diazotrophicus (strain ATCC 49037 / DSM 5601 / CCUG 37298 / CIP 103539 / LMG 7603 / PAl5).